Reading from the N-terminus, the 152-residue chain is Stigma-specific STIG1-like protein 1 (152 aa).

An N-terminal signal peptide occupies residues 1 to 19 (MAFVKLLVSIAITTAITIA).

It belongs to the STIG1 family.

The sequence is that of Stigma-specific STIG1-like protein 1 from Arabidopsis thaliana (Mouse-ear cress).